We begin with the raw amino-acid sequence, 224 residues long: Cytidylate kinase (224 aa).

ATP is bound at residue 11–19 (GPASAGKST).

Belongs to the cytidylate kinase family. Type 1 subfamily.

It localises to the cytoplasm. The enzyme catalyses CMP + ATP = CDP + ADP. It catalyses the reaction dCMP + ATP = dCDP + ADP. The chain is Cytidylate kinase from Ligilactobacillus salivarius (strain UCC118) (Lactobacillus salivarius).